A 234-amino-acid chain; its full sequence is Ubiquinone biosynthesis O-methyltransferase (234 aa).

The S-adenosyl-L-methionine site is built by Arg-40, Gly-59, Asp-80, and Met-123.

Belongs to the methyltransferase superfamily. UbiG/COQ3 family.

It catalyses the reaction a 3-demethylubiquinol + S-adenosyl-L-methionine = a ubiquinol + S-adenosyl-L-homocysteine + H(+). It carries out the reaction a 3-(all-trans-polyprenyl)benzene-1,2-diol + S-adenosyl-L-methionine = a 2-methoxy-6-(all-trans-polyprenyl)phenol + S-adenosyl-L-homocysteine + H(+). The protein operates within cofactor biosynthesis; ubiquinone biosynthesis. Its function is as follows. O-methyltransferase that catalyzes the 2 O-methylation steps in the ubiquinone biosynthetic pathway. The protein is Ubiquinone biosynthesis O-methyltransferase of Coxiella burnetii (strain CbuK_Q154) (Coxiella burnetii (strain Q154)).